The sequence spans 188 residues: Ribosome-recycling factor (188 aa).

It belongs to the RRF family.

Its subcellular location is the cytoplasm. Responsible for the release of ribosomes from messenger RNA at the termination of protein biosynthesis. May increase the efficiency of translation by recycling ribosomes from one round of translation to another. The polypeptide is Ribosome-recycling factor (Granulibacter bethesdensis (strain ATCC BAA-1260 / CGDNIH1)).